The following is a 145-amino-acid chain: 3-hydroxyacyl-[acyl-carrier-protein] dehydratase FabZ (145 aa).

Residue His-49 is part of the active site.

It belongs to the thioester dehydratase family. FabZ subfamily.

Its subcellular location is the cytoplasm. The enzyme catalyses a (3R)-hydroxyacyl-[ACP] = a (2E)-enoyl-[ACP] + H2O. Its function is as follows. Involved in unsaturated fatty acids biosynthesis. Catalyzes the dehydration of short chain beta-hydroxyacyl-ACPs and long chain saturated and unsaturated beta-hydroxyacyl-ACPs. The polypeptide is 3-hydroxyacyl-[acyl-carrier-protein] dehydratase FabZ (Rickettsia bellii (strain RML369-C)).